We begin with the raw amino-acid sequence, 260 residues long: Endonuclease NucS (260 aa).

It belongs to the NucS endonuclease family.

It localises to the cytoplasm. Functionally, cleaves both 3' and 5' ssDNA extremities of branched DNA structures. The sequence is that of Endonuclease NucS from Methanopyrus kandleri (strain AV19 / DSM 6324 / JCM 9639 / NBRC 100938).